The sequence spans 182 residues: Adenine phosphoribosyltransferase 4 (182 aa).

The protein belongs to the purine/pyrimidine phosphoribosyltransferase family. Homodimer.

It is found in the cytoplasm. It carries out the reaction AMP + diphosphate = 5-phospho-alpha-D-ribose 1-diphosphate + adenine. It participates in purine metabolism; AMP biosynthesis via salvage pathway; AMP from adenine: step 1/1. Functionally, catalyzes a salvage reaction resulting in the formation of AMP, that is energically less costly than de novo synthesis. May contribute to the recycling of adenine into adenylate nucleotides and the inactivation of cytokinins by phosphoribosylation. Possesses low activity toward adenine, but can efficiently convert cytokinins from free bases (active form) to the corresponding nucleotides (inactive form). The chain is Adenine phosphoribosyltransferase 4 (APT4) from Arabidopsis thaliana (Mouse-ear cress).